The sequence spans 121 residues: UPF0145 protein SAV_4658 (121 aa).

It belongs to the UPF0145 family.

The chain is UPF0145 protein SAV_4658 from Streptomyces avermitilis (strain ATCC 31267 / DSM 46492 / JCM 5070 / NBRC 14893 / NCIMB 12804 / NRRL 8165 / MA-4680).